The primary structure comprises 228 residues: RNA pyrophosphohydrolase (228 aa).

Residues 1–70 (MEKRSGIGRL…KQWVKMMNDI (70 aa)) are unknown. Residues 71 to 228 (VIDKRGFRLG…VLTEFAEFIR (158 aa)) are rppH domain. The Nudix hydrolase domain occupies 76–221 (GFRLGVGMVI…KRDVYQKVLT (146 aa)). Residues 109–130 (GGLLPNETLREALNRELDEEVG) carry the Nudix box motif.

In the C-terminal section; belongs to the Nudix hydrolase family. RppH subfamily. A divalent metal cation serves as cofactor.

Its function is as follows. Accelerates the degradation of transcripts by removing pyrophosphate from the 5'-end of triphosphorylated RNA, leading to a more labile monophosphorylated state that can stimulate subsequent ribonuclease cleavage. The protein is RNA pyrophosphohydrolase of Coxiella burnetii (strain RSA 493 / Nine Mile phase I).